Here is a 689-residue protein sequence, read N- to C-terminus: FACT complex subunit ssrp1-B (689 aa).

Disordered stretches follow at residues 434-565 (DNKS…KRAT) and 592-689 (KAGA…GESD). A compositionally biased stretch (acidic residues) spans 461 to 477 (EQDDDSDDESTDEDYDL). Composition is skewed to basic and acidic residues over residues 478 to 491 (DKDM…KDSS), 523 to 532 (IEPKKKESKE), 538 to 563 (EKKE…EPKR), and 601 to 628 (SADD…EYKK). The HMG box DNA-binding region spans 561 to 627 (PKRATTAYII…RYEAEMKEYK (67 aa)). The span at 638–650 (GPSTKKSSDQSPG) shows a compositional bias: polar residues.

Belongs to the SSRP1 family. In terms of assembly, component of the FACT complex, a stable heterodimer of hmg-3 and spt-16. The FACT complex may also include hmg-4 instead of hmg-3. Expressed in the germline.

It is found in the nucleus. The protein localises to the chromosome. Component of the FACT complex, a general chromatin factor that acts to reorganize nucleosomes. The FACT complex is involved in multiple processes that require DNA as a template such as mRNA elongation, DNA replication and DNA repair. During transcription elongation the FACT complex acts as a histone chaperone that both destabilizes and restores nucleosomal structure. It facilitates the passage of RNA polymerase II and transcription by promoting the dissociation of one histone H2A-H2B dimer from the nucleosome, then subsequently promotes the reestablishment of the nucleosome following the passage of RNA polymerase II. Binds specifically to double-stranded DNA. In embryos, may function redundantly with hmg-4 to promote cell cycle progression and development of the anterior pharynx. In the germline, acts non-redundantly with hmg-4 to play a role in oocyte development. In Caenorhabditis elegans, this protein is FACT complex subunit ssrp1-B.